A 291-amino-acid polypeptide reads, in one-letter code: 5'-3' exonuclease (291 aa).

One can recognise a 5'-3' exonuclease domain in the interval 176–269; it reads APYQVVEYKG…DLTGLKPIQK (94 aa).

In terms of biological role, 5'-3' exonuclease acting preferentially on double-stranded DNA. The sequence is that of 5'-3' exonuclease (polA) from Mycoplasma genitalium (strain ATCC 33530 / DSM 19775 / NCTC 10195 / G37) (Mycoplasmoides genitalium).